The chain runs to 225 residues: Leucyl/phenylalanyl-tRNA--protein transferase (225 aa).

It belongs to the L/F-transferase family.

The protein resides in the cytoplasm. It carries out the reaction N-terminal L-lysyl-[protein] + L-leucyl-tRNA(Leu) = N-terminal L-leucyl-L-lysyl-[protein] + tRNA(Leu) + H(+). The enzyme catalyses N-terminal L-arginyl-[protein] + L-leucyl-tRNA(Leu) = N-terminal L-leucyl-L-arginyl-[protein] + tRNA(Leu) + H(+). It catalyses the reaction L-phenylalanyl-tRNA(Phe) + an N-terminal L-alpha-aminoacyl-[protein] = an N-terminal L-phenylalanyl-L-alpha-aminoacyl-[protein] + tRNA(Phe). In terms of biological role, functions in the N-end rule pathway of protein degradation where it conjugates Leu, Phe and, less efficiently, Met from aminoacyl-tRNAs to the N-termini of proteins containing an N-terminal arginine or lysine. The chain is Leucyl/phenylalanyl-tRNA--protein transferase from Nitrobacter hamburgensis (strain DSM 10229 / NCIMB 13809 / X14).